The primary structure comprises 479 residues: Putative F-box protein At1g67390 (479 aa).

One can recognise an F-box domain in the interval 40–88 (DDRISKLPDDVLVMILASLSTEDALKTSVLSTRWKNVWKQVPYLHFDLL).

The chain is Putative F-box protein At1g67390 from Arabidopsis thaliana (Mouse-ear cress).